The primary structure comprises 726 residues: WD repeat-containing and planar cell polarity effector protein fritz homolog (726 aa).

2 WD repeats span residues 305–343 (LRSK…TLLA) and 344–383 (QAEL…INIQ). The segment covering 642–660 (SSGSTPKHTIQQKIPNGPS) has biased composition (polar residues). The interval 642 to 717 (SSGSTPKHTI…RRQDTEDVGS (76 aa)) is disordered. Positions 672 to 685 (MEETEEEEEEEEEA) are enriched in acidic residues. The segment covering 701-712 (GELREDHRRQDT) has biased composition (basic and acidic residues).

The protein belongs to the WD repeat fritz family. As to quaternary structure, component of the CPLANE (ciliogenesis and planar polarity effectors) complex, composed of INTU, FUZ and WDPCP. Interacts with CPLANE1.

It is found in the cell membrane. It localises to the cytoplasm. Its subcellular location is the cytoskeleton. The protein localises to the cilium axoneme. The protein resides in the cilium basal body. In terms of biological role, probable effector of the planar cell polarity signaling pathway which regulates the septin cytoskeleton in both ciliogenesis and collective cell movements. Together with FUZ and WDPCP proposed to function as core component of the CPLANE (ciliogenesis and planar polarity effectors) complex involved in the recruitment of peripheral IFT-A proteins to basal bodies. Binds phosphatidylinositol 3-phosphate with highest affinity, followed by phosphatidylinositol 4-phosphate and phosphatidylinositol 5-phosphate. This chain is WD repeat-containing and planar cell polarity effector protein fritz homolog (Wdpcp), found in Rattus norvegicus (Rat).